Reading from the N-terminus, the 356-residue chain is tRNA-specific 2-thiouridylase MnmA 2 (356 aa).

ATP contacts are provided by residues 8–15 (GMSGGVDS) and Met34. The active-site Nucleophile is Cys103. Cysteines 103 and 199 form a disulfide. Gly127 lines the ATP pocket. The interval 149-151 (KDQ) is interaction with tRNA. The active-site Cysteine persulfide intermediate is the Cys199. Residues 305–306 (RY) form an interaction with tRNA region.

It belongs to the MnmA/TRMU family.

It localises to the cytoplasm. The enzyme catalyses S-sulfanyl-L-cysteinyl-[protein] + uridine(34) in tRNA + AH2 + ATP = 2-thiouridine(34) in tRNA + L-cysteinyl-[protein] + A + AMP + diphosphate + H(+). In terms of biological role, catalyzes the 2-thiolation of uridine at the wobble position (U34) of tRNA, leading to the formation of s(2)U34. The sequence is that of tRNA-specific 2-thiouridylase MnmA 2 from Clostridium botulinum (strain Okra / Type B1).